The chain runs to 339 residues: 7,8-didemethyl-8-hydroxy-5-deazariboflavin synthase (339 aa).

In terms of domain architecture, Radical SAM core spans 13-258; the sequence is ITYSKNIFIP…RDTDVSIQVP (246 aa). [4Fe-4S] cluster-binding residues include cysteine 27, cysteine 31, and cysteine 34.

Belongs to the radical SAM superfamily. CofG family. In terms of assembly, consists of two subunits, CofG and CofH. [4Fe-4S] cluster is required as a cofactor.

The catalysed reaction is 5-amino-5-(4-hydroxybenzyl)-6-(D-ribitylimino)-5,6-dihydrouracil + S-adenosyl-L-methionine = 7,8-didemethyl-8-hydroxy-5-deazariboflavin + 5'-deoxyadenosine + L-methionine + NH4(+) + H(+). Its pathway is cofactor biosynthesis; coenzyme F0 biosynthesis. In terms of biological role, catalyzes the radical-mediated synthesis of 7,8-didemethyl-8-hydroxy-5-deazariboflavin from 5-amino-5-(4-hydroxybenzyl)-6-(D-ribitylimino)-5,6-dihydrouracil. The chain is 7,8-didemethyl-8-hydroxy-5-deazariboflavin synthase from Methanobrevibacter smithii (strain ATCC 35061 / DSM 861 / OCM 144 / PS).